The chain runs to 1135 residues: Integrin alpha-7 (1135 aa).

A signal peptide spans 1–33; the sequence is MARIPRCDFLGLPGICYLLSFLLAGLLLPRASA. At 34–1036 the chain is on the extracellular side; the sequence is FNLDVMGAIR…VAVVAEGVPW (1003 aa). FG-GAP repeat units follow at residues 38–103, 110–165, 185–238, 248–305, 306–367, 368–423, and 427–486; these read VMGA…ETDC, RGAN…RCFV, EGRP…DPDQ, DRLT…ASRL, IPEV…HWAD, ISPL…GVVT, and QVLE…IDPR. Asparagine 86 is a glycosylation site (N-linked (GlcNAc...) asparagine). Disulfide bonds link cysteine 94/cysteine 103, cysteine 140/cysteine 163, and cysteine 184/cysteine 197. Ca(2+)-binding residues include aspartate 328, asparagine 330, aspartate 332, aspartate 336, aspartate 390, asparagine 392, aspartate 394, aspartate 398, aspartate 448, aspartate 450, asparagine 452, tyrosine 454, and aspartate 456. 6 disulfide bridges follow: cysteine 495/cysteine 502, cysteine 508/cysteine 571, cysteine 637/cysteine 643, cysteine 736/cysteine 747, cysteine 894/cysteine 948, and cysteine 955/cysteine 960. The N-linked (GlcNAc...) asparagine glycan is linked to asparagine 741. Residues 905–916 are compositionally biased toward basic and acidic residues; it reads VDSRDRRRRELG. The interval 905–933 is disordered; sequence VDSRDRRRRELGQPEPQEPPEKVEPSTSW. Asparagine 943 carries an N-linked (GlcNAc...) asparagine glycan. 2 N-linked (GlcNAc...) asparagine glycosylation sites follow: asparagine 979 and asparagine 999. A helical membrane pass occupies residues 1037-1057; that stretch reads WVILLAVLAGLLVLALLVLLL. Topologically, residues 1058–1135 are cytoplasmic; the sequence is WKLGFFKRAK…PDGHPVSVTA (78 aa). The GFFKR motif motif lies at 1061 to 1065; it reads GFFKR. 3 repeat units span residues 1111-1114, 1119-1122, and 1127-1130. Residues 1111 to 1130 form a 3 X 4 AA repeats of D-X-H-P region; sequence DAHPILAADWHPELGPDGHP.

This sequence belongs to the integrin alpha chain family. In terms of assembly, interacts (via C-terminus intracellular tail region) with CIB1; the interaction is stabilized/increased in a calcium- and magnesium-dependent manner. Heterodimer of an alpha and a beta subunit. The alpha subunit is composed of a heavy and a light chain linked by a disulfide bond. Alpha-7 associates with beta-1. Interacts with COMP. Post-translationally, ADP-ribosylated on at least two sites of the extracellular domain in skeletal myotubes. A 70 kDa form is created by proteolytic cleavage. Cleavage is elevated during myogenic differentiation and the cleaved form enhances cell adhesion and spreading on laminin. In terms of tissue distribution, expressed in skeletal and cardiac muscle. Expressed in replicating myoblasts. In differentiated muscle fibers localizes between fibers and the surrounding matrix. Isoform Alpha-7X1A and isoform Alpha-7X1B are expressed at myotendinous and neuromuscular junctions; isoform Alpha-7X1C is expressed at neuromuscular junctions and at extrasynaptic sites.

Its subcellular location is the membrane. Functionally, integrin alpha-7/beta-1 is the primary laminin receptor on skeletal myoblasts and adult myofibers. During myogenic differentiation, it may induce changes in the shape and mobility of myoblasts, and facilitate their localization at laminin-rich sites of secondary fiber formation. Involved in the maintenance of the myofibers cytoarchitecture as well as for their anchorage, viability and functional integrity. Required to promote contractile phenotype acquisition in differentiated airway smooth muscle (ASM) cells. Acts as a Schwann cell receptor for laminin-2. Acts as a receptor of COMP and mediates its effect on vascular smooth muscle cells (VSMCs) maturation. In Rattus norvegicus (Rat), this protein is Integrin alpha-7 (Itga7).